The sequence spans 465 residues: 23S rRNA (uracil(1939)-C(5))-methyltransferase RlmD (465 aa).

Residues Met-1 to Asp-20 form a disordered region. The 69-residue stretch at Ala-12–Asp-80 folds into the TRAM domain. The [4Fe-4S] cluster site is built by Cys-93, Cys-99, Cys-102, and Cys-181. Gln-289, Phe-318, Asn-323, Glu-339, Asn-367, and Asp-388 together coordinate S-adenosyl-L-methionine. Cys-421 functions as the Nucleophile in the catalytic mechanism.

Belongs to the class I-like SAM-binding methyltransferase superfamily. RNA M5U methyltransferase family. RlmD subfamily.

It carries out the reaction uridine(1939) in 23S rRNA + S-adenosyl-L-methionine = 5-methyluridine(1939) in 23S rRNA + S-adenosyl-L-homocysteine + H(+). Functionally, catalyzes the formation of 5-methyl-uridine at position 1939 (m5U1939) in 23S rRNA. The chain is 23S rRNA (uracil(1939)-C(5))-methyltransferase RlmD from Burkholderia thailandensis (strain ATCC 700388 / DSM 13276 / CCUG 48851 / CIP 106301 / E264).